The primary structure comprises 202 residues: FMN reductase (NADH) RutF 1 (202 aa).

The segment at 168 to 202 is disordered; that stretch reads PRTPRSGSAPAEPARAPRAVGARPAEGPALALRSA. Residues 171–196 show a composition bias toward low complexity; the sequence is PRSGSAPAEPARAPRAVGARPAEGPA.

Belongs to the non-flavoprotein flavin reductase family. RutF subfamily.

It carries out the reaction FMNH2 + NAD(+) = FMN + NADH + 2 H(+). In terms of biological role, catalyzes the reduction of FMN to FMNH2 which is used to reduce pyrimidine by RutA via the Rut pathway. The chain is FMN reductase (NADH) RutF 1 from Methylorubrum extorquens (strain PA1) (Methylobacterium extorquens).